Here is a 316-residue protein sequence, read N- to C-terminus: Transaldolase (316 aa).

The Schiff-base intermediate with substrate role is filled by lysine 131.

Belongs to the transaldolase family. Type 1 subfamily. As to quaternary structure, homodimer.

It localises to the cytoplasm. The enzyme catalyses D-sedoheptulose 7-phosphate + D-glyceraldehyde 3-phosphate = D-erythrose 4-phosphate + beta-D-fructose 6-phosphate. It participates in carbohydrate degradation; pentose phosphate pathway; D-glyceraldehyde 3-phosphate and beta-D-fructose 6-phosphate from D-ribose 5-phosphate and D-xylulose 5-phosphate (non-oxidative stage): step 2/3. Transaldolase is important for the balance of metabolites in the pentose-phosphate pathway. The polypeptide is Transaldolase (Chromohalobacter salexigens (strain ATCC BAA-138 / DSM 3043 / CIP 106854 / NCIMB 13768 / 1H11)).